The sequence spans 139 residues: uncharacterized protein (139 aa).

2 consecutive transmembrane segments (helical) span residues 35 to 55 (LVFL…SFLI) and 57 to 77 (FGIL…LTVI).

The protein localises to the membrane. This is an uncharacterized protein from Saccharomyces cerevisiae (strain ATCC 204508 / S288c) (Baker's yeast).